Reading from the N-terminus, the 810-residue chain is Transitional endoplasmic reticulum ATPase homolog 2 (810 aa).

ATP is bound by residues 252–258 (PGTGKTL), Asn-353, His-389, and 526–531 (GCGKTL). Residues 713–727 (RQEKERQDRSARGEE) are compositionally biased toward basic and acidic residues. Disordered regions lie at residues 713-732 (RQEK…MEDE) and 777-810 (FGNN…DLYN). Residues 793 to 802 (PVGGNGGSGG) show a composition bias toward gly residues. Residues 805–810 (DDDLYN) are interaction with ufd-2.

The protein belongs to the AAA ATPase family. CDC48 subfamily. In terms of assembly, homohexamer; oligomerization is ATP-independent. Forms a ring-shaped particle of 18.3 nm diameter, that displays 6-fold radial symmetry. Interacts with cdc-48.1 and thus may form heterohexamers. Forms a complex composed of ubxn-3, cdc-48.1 and/or cdc-48.2 and substrate cdt-1. Interacts (via N-terminus) with ubxn-3. Interacts (via N-terminus) with atx-3 (via RRDR motif). Interacts (via N-terminus) with ubxn-5. Interacts with ufd-1. Interacts (via DDDLYN motif) with ufd-2. Interacts (via N-terminus) with ubxn-1. Interacts (via N-terminus) with ubxn-2. Interacts (via N-terminus) with ubxn-4. Interacts with ubxn-6. Expressed in body wall muscles.

It is found in the cytoplasm. It catalyses the reaction ATP + H2O = ADP + phosphate + H(+). Its activity is regulated as follows. The first ATP-binding region has low ATPase activity. The second ATP-binding region is responsible for ATPase activity. ATP binding to the first ATP-binding region induces intrinsic activity of the second ATP-binding region. While ATP binding to the first ATP-binding region appears to prevent ATP hydrolysis by the second ATP-binding region, ADP-binding to first region promotes the coordinate and cooperative ATPase cycle of the second ATP-binding region. ATP binding to the first ATP-binding region induces a conformational change, promoting the rotation of the first ATP-binding region relative to the second ATP-binding region in the hexamer. Inhibited by N-ethylmaleimide (NEM). In terms of biological role, ATP-dependent chaperone which probably uses the energy provided by ATP hydrolysis to generate mechanical force to unfold substrate proteins, disassemble protein complexes, and disaggregate protein aggregates. However, able to prevent aggregation of unfolded proteins also in an ATP-independent manner. Targets polyubiquitinated proteins for proteasomal degradation by binding to 'Lys-48'-linked polyubiquitin chains. Involved in the cytoplasmic elimination of misfolded proteins exported from the ER. This pathway, known as ERAD, prevents the activation of the unfolded protein response (UPR) caused by the accumulation of misfolded proteins in the ER. Together with udf-2 and chn-1, regulates myosin assembly in body wall muscles by targeting myosin chaperone unc-45 for proteasomal degradation. During oocyte meiosis and together with cdc-48.1, required for chromosome condensation at the diakinesis phase in prophase I and for progression of metaphase I. During the first embryonic cell division, regulates DNA replication and thus chromosome segregation and decondensation, and nuclear envelope re-assembly. In S phase and in association with ufd-1, npl-4.1 and/or npl-4.2 and ubxn-3, ensures the degradation of DNA licensing factor cdt-1 after the initiation of DNA replication and thus the disassembly of the DNA replication CMG helicase complex by promoting the dissociation from chromatin of several of its components including cdc-45 and sld-5. Regulates ubxn-3 nuclear localization during S phase. During the first embryonic cell divisions and together with cdc-48.1, regulates the re-assembly of the nuclear envelope after mitosis possibly by inactivating kinase air-2, a component of the chromosomal passenger complex (CPC). In Caenorhabditis elegans, this protein is Transitional endoplasmic reticulum ATPase homolog 2 (cdc-48.2).